The chain runs to 390 residues: MPPSGLRLLPLLLPLLWLLVLTPGRPAAGLSTCKTIDMELVKRKRIEAIRGQILSKLRLASPPSQGDVPPGPLPEAVLALYNSTRDRVAGESVEPEPEPEADYYAKEVTRVLMVESGNQIYDKFKGTPHSLYMLFNTSELREAVPEPVLLSRAELRLLRLKLKVEQHVELYQKYSNDSWRYLSNRLLAPSDSPEWLSFDVTGVVRQWLTRREAIEGFRLSAHCSCDSKDNTLHVEINGFNSGRRGDLATIHGMNRPFLLLMATPLERAQHLHSSRHRRALDTNYCFSSTEKNCCVRQLYIDFRKDLGWKWIHEPKGYHANFCLGPCPYIWSLDTQYSKVLALYNQHNPGASAAPCCVPQALEPLPIVYYVGRKPKVEQLSNMIVRSCKCS.

Residues 1–29 (MPPSGLRLLPLLLPLLWLLVLTPGRPAAG) form the signal peptide. A straightjacket domain region spans residues 30–74 (LSTCKTIDMELVKRKRIEAIRGQILSKLRLASPPSQGDVPPGPLP). Residues 75-271 (EAVLALYNST…ATPLERAQHL (197 aa)) form an arm domain region. Residues Asn82, Asn136, and Asn176 are each glycosylated (N-linked (GlcNAc...) asparagine). Positions 226-252 (DSKDNTLHVEINGFNSGRRGDLATIHG) are bowtie tail. Residues 244–246 (RGD) carry the Cell attachment site motif. 4 cysteine pairs are disulfide-bonded: Cys285-Cys294, Cys293-Cys356, Cys322-Cys387, and Cys326-Cys389.

The protein belongs to the TGF-beta family. In terms of assembly, homodimer; disulfide-linked. Interacts with the serine proteases, HTRA1 and HTRA3: the interaction with either inhibits TGFB1-mediated signaling and the HTRA protease activity is required for this inhibition. May interact with THSD4; this interaction may lead to sequestration by FBN1 microfibril assembly and attenuation of TGFB signaling. Interacts with CD109, DPT and ASPN. Interacts with EFEMP2. Interacts with TSKU; the interaction contributes to regulation of the hair cycle. Interacts with TGFBR3. Homodimer; disulfide-linked. Interacts with transforming growth factor beta-1 (TGF-beta-1) chain; interaction is non-covalent and maintains TGF-beta-1 in a latent state; each latency-associated peptide (LAP) monomer interacts with TGF-beta-1 in the other monomer. Interacts with LTBP1; leading to regulation of TGF-beta-1 activation. Interacts with LRRC32/GARP; leading to regulation of TGF-beta-1 activation on the surface of activated regulatory T-cells (Tregs). Interacts with LRRC33/NRROS; leading to regulation of TGF-beta-1 activation in macrophages and microglia. Interacts (via cell attachment site) with integrins ITGAV and ITGB6 (ITGAV:ITGB6), leading to release of the active TGF-beta-1. Interacts with NREP; the interaction results in a decrease in TGFB1 autoinduction. Interacts with HSP90AB1; inhibits latent TGFB1 activation. As to quaternary structure, homodimer; disulfide-linked. Interacts with TGF-beta receptors (TGFBR1 and TGFBR2), leading to signal transduction. Post-translationally, transforming growth factor beta-1 proprotein: The precursor proprotein is cleaved in the Golgi apparatus by FURIN to form Transforming growth factor beta-1 (TGF-beta-1) and Latency-associated peptide (LAP) chains, which remain non-covalently linked, rendering TGF-beta-1 inactive. N-glycosylated. Deglycosylation leads to activation of Transforming growth factor beta-1 (TGF-beta-1); mechanisms triggering deglycosylation-driven activation of TGF-beta-1 are however unclear.

The protein resides in the secreted. Its subcellular location is the extracellular space. It is found in the extracellular matrix. Transforming growth factor beta-1 proprotein: Precursor of the Latency-associated peptide (LAP) and Transforming growth factor beta-1 (TGF-beta-1) chains, which constitute the regulatory and active subunit of TGF-beta-1, respectively. Its function is as follows. Required to maintain the Transforming growth factor beta-1 (TGF-beta-1) chain in a latent state during storage in extracellular matrix. Associates non-covalently with TGF-beta-1 and regulates its activation via interaction with 'milieu molecules', such as LTBP1, LRRC32/GARP and LRRC33/NRROS, that control activation of TGF-beta-1. Interaction with LRRC33/NRROS regulates activation of TGF-beta-1 in macrophages and microglia. Interaction with LRRC32/GARP controls activation of TGF-beta-1 on the surface of activated regulatory T-cells (Tregs). Interaction with integrins (ITGAV:ITGB6 or ITGAV:ITGB8) results in distortion of the Latency-associated peptide chain and subsequent release of the active TGF-beta-1. Functionally, multifunctional protein that regulates the growth and differentiation of various cell types and is involved in various processes, such as normal development, immune function, microglia function and responses to neurodegeneration. Activation into mature form follows different steps: following cleavage of the proprotein in the Golgi apparatus, Latency-associated peptide (LAP) and Transforming growth factor beta-1 (TGF-beta-1) chains remain non-covalently linked rendering TGF-beta-1 inactive during storage in extracellular matrix. At the same time, LAP chain interacts with 'milieu molecules', such as LTBP1, LRRC32/GARP and LRRC33/NRROS that control activation of TGF-beta-1 and maintain it in a latent state during storage in extracellular milieus. TGF-beta-1 is released from LAP by integrins (ITGAV:ITGB6 or ITGAV:ITGB8): integrin-binding to LAP stabilizes an alternative conformation of the LAP bowtie tail and results in distortion of the LAP chain and subsequent release of the active TGF-beta-1. Once activated following release of LAP, TGF-beta-1 acts by binding to TGF-beta receptors (TGFBR1 and TGFBR2), which transduce signal. While expressed by many cells types, TGF-beta-1 only has a very localized range of action within cell environment thanks to fine regulation of its activation by Latency-associated peptide chain (LAP) and 'milieu molecules'. Plays an important role in bone remodeling: acts as a potent stimulator of osteoblastic bone formation, causing chemotaxis, proliferation and differentiation in committed osteoblasts. Can promote either T-helper 17 cells (Th17) or regulatory T-cells (Treg) lineage differentiation in a concentration-dependent manner. At high concentrations, leads to FOXP3-mediated suppression of RORC and down-regulation of IL-17 expression, favoring Treg cell development. At low concentrations in concert with IL-6 and IL-21, leads to expression of the IL-17 and IL-23 receptors, favoring differentiation to Th17 cells. Stimulates sustained production of collagen through the activation of CREB3L1 by regulated intramembrane proteolysis (RIP). Mediates SMAD2/3 activation by inducing its phosphorylation and subsequent translocation to the nucleus. Positively regulates odontoblastic differentiation in dental papilla cells, via promotion of IPO7-mediated translocation of phosphorylated SMAD2 to the nucleus and subsequent transcription of target genes. Can induce epithelial-to-mesenchymal transition (EMT) and cell migration in various cell types. This is Transforming growth factor beta-1 proprotein (TGFB1) from Sus scrofa (Pig).